The sequence spans 93 residues: FMRFamide-like neuropeptides 22 (93 aa).

Positions 1 to 19 are cleaved as a signal peptide; it reads MNRSMIALCVVLMVSLVSA. The propeptide occupies 20–46; it reads QVFDLDGQQLAGLEQNDARLMEQQVKR. 3 positions are modified to phenylalanine amide: Phe-55, Phe-67, and Phe-79. The propeptide occupies 83–93; that stretch reads SGAEAVSEQDY.

Belongs to the FARP (FMRFamide related peptide) family.

It localises to the secreted. Functionally, FMRFamides and FMRFamide-like peptides are neuropeptides. SPSAKWMRF-amide: Acts as a ligand for the npr-22 receptor in vitro. The chain is FMRFamide-like neuropeptides 22 from Caenorhabditis elegans.